A 99-amino-acid chain; its full sequence is RNA-binding protein Hfq (99 aa).

The region spanning 9-68 (DPFLNALRRERVPVSIYLVNGIKLQGQIESFDQFVILLKNTVSQMVYKHAISTVVPSRPV) is the Sm domain. Positions 64 to 99 (PSRPVSHHSNNPGGGSNYHGNNTAASQQSQEADDAE) are disordered.

It belongs to the Hfq family. Homohexamer.

Its function is as follows. RNA chaperone that binds small regulatory RNA (sRNAs) and mRNAs to facilitate mRNA translational regulation in response to envelope stress, environmental stress and changes in metabolite concentrations. Also binds with high specificity to tRNAs. The chain is RNA-binding protein Hfq from Pectobacterium carotovorum subsp. carotovorum (strain PC1).